A 403-amino-acid polypeptide reads, in one-letter code: Acetyl-CoA acetyltransferase IA (403 aa).

The active-site Acyl-thioester intermediate is the C91. Active-site proton acceptor residues include H353 and C383. A Microbody targeting signal motif is present at residues 401–403 (AKL).

This sequence belongs to the thiolase-like superfamily. Thiolase family. Multimeric.

Its subcellular location is the peroxisome. The catalysed reaction is 2 acetyl-CoA = acetoacetyl-CoA + CoA. It participates in metabolic intermediate biosynthesis; (R)-mevalonate biosynthesis; (R)-mevalonate from acetyl-CoA: step 1/3. In Candida tropicalis (Yeast), this protein is Acetyl-CoA acetyltransferase IA (PACTA).